The sequence spans 993 residues: Signal peptide, CUB and EGF-like domain-containing protein 3 (993 aa).

An N-terminal signal peptide occupies residues 1–20 (MGSGRVPGLCLLLLLVHARA). In terms of domain architecture, EGF-like 1; calcium-binding spans 29–69 (DVDECVEGTDNCHIDAICQNTPRSYKCICKSGYTGDGKHCK). 26 disulfide bridges follow: Cys33/Cys46, Cys40/Cys55, Cys57/Cys68, Cys74/Cys86, Cys82/Cys95, Cys97/Cys110, Cys116/Cys127, Cys123/Cys136, Cys161/Cys172, Cys168/Cys182, Cys184/Cys197, Cys201/Cys212, Cys208/Cys221, Cys223/Cys236, Cys240/Cys251, Cys247/Cys260, Cys262/Cys275, Cys281/Cys292, Cys288/Cys301, Cys303/Cys316, Cys322/Cys332, Cys328/Cys341, Cys343/Cys355, Cys361/Cys372, Cys368/Cys381, and Cys383/Cys397. The EGF-like 2; calcium-binding domain occupies 70–111 (DVDECEREDNAGCVHDCVNIPGNYRCTCYDGFHLAHDGHNCL). Positions 112 to 148 (DVDECAEGNGGCQQSCVNMMGSYECHCRDGFFLSDNQ) constitute an EGF-like 3; calcium-binding domain. EGF-like domains follow at residues 157–198 (EGMN…RDCK), 199–237 (LTCNYGNGGCQHTCDDTEQGPRCGCHVKFVLHTDGKTCI), and 238–276 (ETCAVNNGGCDSKCHDAATGVHCSCPVGFMLQPDRKTCK). Positions 277 to 317 (DIDECRLNNGGCDHICRNTVGSFECSCKKGYKLLINERSCQ) constitute an EGF-like 7; calcium-binding domain. The EGF-like 8; calcium-binding domain occupies 318-356 (DIDECSFDRTCDHMCVNTPGSFQCLCHRGYLLYGVTHCG). Residues 357 to 398 (DVDECSINKGGCRFGCINTPGSYQCTCPAGQGRLHWNGKDCT) form the EGF-like 9; calcium-binding domain. Asn417, Asn464, Asn685, Asn756, and Asn785 each carry an N-linked (GlcNAc...) asparagine glycan. Cystine bridges form between Cys804–Cys830 and Cys857–Cys878. One can recognise a CUB domain in the interval 804–916 (CGGELGEFTG…RGFQIPYVTY (113 aa)).

Forms homooligomers. Forms heterooligomers with SCUBE1 and SCUBE2. Interacts with TGFBR2 through the CUB domain; this interaction does not affect TGFB1-binding to TGFBR2. Interacts with BMP2, BMP4 and BMP7; the interaction is mediated by the CUB domain. Interacts with BMPR1A, BMPR1B and BMPR2; the interaction with BMPR1A and BMPR1B is BMP2- and BMP4-dependent. Post-translationally, N-glycosylated. In terms of processing, proteolytic cleavage produces a CUB-containing C-terminal fragment that retains the ability to bind to TGFBR2. This reaction is catalyzed in vitro by MMP2 and, to a lesser extent, by MMP9. In terms of tissue distribution, highly expressed in femur and humerus with little or no expression in non-bone tissues.

The protein localises to the secreted. It localises to the cell surface. Functionally, is a positive regulator of the BMP signaling pathway, required for proper chondrogenesis, osteogenesis and skeletal development. It acts as a coreceptor for BMP ligands, particularly BMP2 and BMP4, facilitating their interactions with BMP type I receptors. It is required for ligand-induced recruitment of BMP receptors to lipid rafts. Binds to TGFBR2 and activates TGFB signaling. This Mus musculus (Mouse) protein is Signal peptide, CUB and EGF-like domain-containing protein 3.